The following is a 356-amino-acid chain: Histidinol-phosphate aminotransferase 2 (356 aa).

K217 is subject to N6-(pyridoxal phosphate)lysine.

The protein belongs to the class-II pyridoxal-phosphate-dependent aminotransferase family. Histidinol-phosphate aminotransferase subfamily. As to quaternary structure, homodimer. Pyridoxal 5'-phosphate serves as cofactor.

It catalyses the reaction L-histidinol phosphate + 2-oxoglutarate = 3-(imidazol-4-yl)-2-oxopropyl phosphate + L-glutamate. The protein operates within amino-acid biosynthesis; L-histidine biosynthesis; L-histidine from 5-phospho-alpha-D-ribose 1-diphosphate: step 7/9. The sequence is that of Histidinol-phosphate aminotransferase 2 from Burkholderia pseudomallei (strain 1710b).